The primary structure comprises 205 residues: Pyridoxal 5'-phosphate synthase subunit PdxT (205 aa).

L-glutamine is bound at residue 53–55 (GES). Cysteine 85 (nucleophile) is an active-site residue. L-glutamine contacts are provided by residues arginine 112 and 140–141 (IR). Active-site charge relay system residues include histidine 176 and glutamate 178.

This sequence belongs to the glutaminase PdxT/SNO family. In the presence of PdxS, forms a dodecamer of heterodimers. Only shows activity in the heterodimer.

The enzyme catalyses aldehydo-D-ribose 5-phosphate + D-glyceraldehyde 3-phosphate + L-glutamine = pyridoxal 5'-phosphate + L-glutamate + phosphate + 3 H2O + H(+). The catalysed reaction is L-glutamine + H2O = L-glutamate + NH4(+). The protein operates within cofactor biosynthesis; pyridoxal 5'-phosphate biosynthesis. Functionally, catalyzes the hydrolysis of glutamine to glutamate and ammonia as part of the biosynthesis of pyridoxal 5'-phosphate. The resulting ammonia molecule is channeled to the active site of PdxS. The sequence is that of Pyridoxal 5'-phosphate synthase subunit PdxT from Haloquadratum walsbyi (strain DSM 16790 / HBSQ001).